Here is a 183-residue protein sequence, read N- to C-terminus: Protein Syd (183 aa).

It belongs to the Syd family.

It is found in the cell inner membrane. Its function is as follows. Interacts with the SecY protein in vivo. May bind preferentially to an uncomplexed state of SecY, thus functioning either as a chelating agent for excess SecY in the cell or as a regulatory factor that negatively controls the translocase function. The sequence is that of Protein Syd from Yersinia pseudotuberculosis serotype O:1b (strain IP 31758).